Here is a 231-residue protein sequence, read N- to C-terminus: 2-C-methyl-D-erythritol 4-phosphate cytidylyltransferase (231 aa).

Belongs to the IspD/TarI cytidylyltransferase family. IspD subfamily.

It catalyses the reaction 2-C-methyl-D-erythritol 4-phosphate + CTP + H(+) = 4-CDP-2-C-methyl-D-erythritol + diphosphate. The protein operates within isoprenoid biosynthesis; isopentenyl diphosphate biosynthesis via DXP pathway; isopentenyl diphosphate from 1-deoxy-D-xylulose 5-phosphate: step 2/6. Its function is as follows. Catalyzes the formation of 4-diphosphocytidyl-2-C-methyl-D-erythritol from CTP and 2-C-methyl-D-erythritol 4-phosphate (MEP). This is 2-C-methyl-D-erythritol 4-phosphate cytidylyltransferase from Bacillus licheniformis (strain ATCC 14580 / DSM 13 / JCM 2505 / CCUG 7422 / NBRC 12200 / NCIMB 9375 / NCTC 10341 / NRRL NRS-1264 / Gibson 46).